A 400-amino-acid chain; its full sequence is Argininosuccinate synthase (400 aa).

Residues 11–19 and alanine 38 contribute to the ATP site; that span reads AYSGGLDTS. L-citrulline contacts are provided by tyrosine 89 and serine 94. Glycine 119 serves as a coordination point for ATP. L-aspartate is bound by residues threonine 121, asparagine 125, and aspartate 126. Asparagine 125 is a binding site for L-citrulline. Residues arginine 129, serine 179, serine 188, glutamate 264, and tyrosine 276 each coordinate L-citrulline.

This sequence belongs to the argininosuccinate synthase family. Type 1 subfamily. In terms of assembly, homotetramer.

It is found in the cytoplasm. It catalyses the reaction L-citrulline + L-aspartate + ATP = 2-(N(omega)-L-arginino)succinate + AMP + diphosphate + H(+). The protein operates within amino-acid biosynthesis; L-arginine biosynthesis; L-arginine from L-ornithine and carbamoyl phosphate: step 2/3. This is Argininosuccinate synthase from Oleidesulfovibrio alaskensis (strain ATCC BAA-1058 / DSM 17464 / G20) (Desulfovibrio alaskensis).